The primary structure comprises 793 residues: Putative potassium transporter 8 (793 aa).

Over 1-22 (MDLEFGRGMRSPQRDSWKTTLL) the chain is Cytoplasmic. The chain crosses the membrane as a helical span at residues 23-43 (LAYQSLGVVYGDLSISPLYVF). Residues 44–59 (KSTFAEDIQHSETNEE) lie on the Extracellular side of the membrane. Residues 60-80 (IFGVLSFVFWTLTLIPLIKYV) traverse the membrane as a helical segment. The Cytoplasmic portion of the chain corresponds to 81–151 (SIVLRADDNG…EKHKKLHTAL (71 aa)). Residues 152-172 (LIMVLIGTCMVIGDGVLTPAI) traverse the membrane as a helical segment. The Extracellular segment spans residues 173-191 (SVFSAVSGLEFSLSKDHRE). Residues 192 to 212 (YAVIPITCVILAFLFALQHYG) form a helical membrane-spanning segment. Over 213-215 (THR) the chain is Cytoplasmic. Residues 216-236 (VGFLFAPIVLAWLICMSALGL) form a helical membrane-spanning segment. Residues 237–264 (YNIIHWNPHVYQALNPCYMFKFLKKTRK) are Extracellular-facing. The helical transmembrane segment at 265 to 285 (YGWMSLGGILLCMTGSEAMFA) threads the bilayer. The Cytoplasmic portion of the chain corresponds to 286-292 (DLGHFSY). The helical transmembrane segment at 293–313 (SAIQLAFTSLVYPALILAYMG) threads the bilayer. The Extracellular segment spans residues 314 to 343 (QAAYLSKHHDFYSNSQVGFYIAVPDKVRWP). The chain crosses the membrane as a helical span at residues 344–364 (VLVLAILASVVGSQAIISGTF). At 365 to 391 (SIINQSQSLSCFPRVKVVHTSDKIHGQ) the chain is on the cytoplasmic side. Residues 392-412 (IYIPEINWLLMILCIAVTVGF) form a helical membrane-spanning segment. Over 413–422 (RDTKHMGNAS) the chain is Extracellular. An N-linked (GlcNAc...) asparagine glycan is attached at Asn420. Residues 423–443 (GLAVITVMLVTTCLTSLVIML) form a helical membrane-spanning segment. Residues 444-448 (CWRRP) lie on the Cytoplasmic side of the membrane. The helical transmembrane segment at 449 to 469 (PVLALCFLLFFGSVEALYFSA) threads the bilayer. Residues 470–473 (SLIK) lie on the Extracellular side of the membrane. A helical membrane pass occupies residues 474–494 (FLEGAWLPILLALFLMAVMLV). The Cytoplasmic segment spans residues 495–793 (WHYTTIKKYE…LLEVGMVYVL (299 aa)). Over residues 664 to 675 (DSVQHSSAASVE) the composition is skewed to polar residues. Residues 664–698 (DSVQHSSAASVETTTTRRRSGGGDDDGSPGGGGGR) are disordered.

It belongs to the HAK/KUP transporter (TC 2.A.72.3) family.

It is found in the membrane. In terms of biological role, high-affinity potassium transporter. This is Putative potassium transporter 8 (HAK8) from Oryza sativa subsp. japonica (Rice).